The following is a 343-amino-acid chain: Phosphoribosylformylglycinamidine cyclo-ligase (343 aa).

Belongs to the AIR synthase family.

The protein resides in the cytoplasm. It catalyses the reaction 2-formamido-N(1)-(5-O-phospho-beta-D-ribosyl)acetamidine + ATP = 5-amino-1-(5-phospho-beta-D-ribosyl)imidazole + ADP + phosphate + H(+). Its pathway is purine metabolism; IMP biosynthesis via de novo pathway; 5-amino-1-(5-phospho-D-ribosyl)imidazole from N(2)-formyl-N(1)-(5-phospho-D-ribosyl)glycinamide: step 2/2. This Carboxydothermus hydrogenoformans (strain ATCC BAA-161 / DSM 6008 / Z-2901) protein is Phosphoribosylformylglycinamidine cyclo-ligase.